Consider the following 283-residue polypeptide: tRNA pseudouridine synthase B (283 aa).

The active-site Nucleophile is the D38.

This sequence belongs to the pseudouridine synthase TruB family. Type 1 subfamily.

The catalysed reaction is uridine(55) in tRNA = pseudouridine(55) in tRNA. Its function is as follows. Responsible for synthesis of pseudouridine from uracil-55 in the psi GC loop of transfer RNAs. This chain is tRNA pseudouridine synthase B, found in Onion yellows phytoplasma (strain OY-M).